We begin with the raw amino-acid sequence, 126 residues long: Large ribosomal subunit protein bL12 (126 aa).

It belongs to the bacterial ribosomal protein bL12 family. As to quaternary structure, homodimer. Part of the ribosomal stalk of the 50S ribosomal subunit. Forms a multimeric L10(L12)X complex, where L10 forms an elongated spine to which 2 to 4 L12 dimers bind in a sequential fashion. Binds GTP-bound translation factors.

Forms part of the ribosomal stalk which helps the ribosome interact with GTP-bound translation factors. Is thus essential for accurate translation. This chain is Large ribosomal subunit protein bL12, found in Elusimicrobium minutum (strain Pei191).